We begin with the raw amino-acid sequence, 50 residues long: MGQKWKLYIVKDGKVIRKNKFCPRCGPGVFMADHGDRWACGKCGYTEWKR.

Residues Cys22, Cys25, Cys40, and Cys43 each coordinate Zn(2+). A C4-type zinc finger spans residues 22-43; sequence CPRCGPGVFMADHGDRWACGKC.

It belongs to the eukaryotic ribosomal protein eS31 family. As to quaternary structure, part of the 30S ribosomal subunit. Zn(2+) serves as cofactor.

The chain is Small ribosomal subunit protein eS31 from Pyrococcus horikoshii (strain ATCC 700860 / DSM 12428 / JCM 9974 / NBRC 100139 / OT-3).